The following is a 497-amino-acid chain: Proline--tRNA ligase (497 aa).

This sequence belongs to the class-II aminoacyl-tRNA synthetase family. ProS type 3 subfamily. As to quaternary structure, homodimer.

Its subcellular location is the cytoplasm. It catalyses the reaction tRNA(Pro) + L-proline + ATP = L-prolyl-tRNA(Pro) + AMP + diphosphate. Its function is as follows. Catalyzes the attachment of proline to tRNA(Pro) in a two-step reaction: proline is first activated by ATP to form Pro-AMP and then transferred to the acceptor end of tRNA(Pro). This is Proline--tRNA ligase from Deinococcus geothermalis (strain DSM 11300 / CIP 105573 / AG-3a).